We begin with the raw amino-acid sequence, 331 residues long: HTH-type transcriptional regulator GntR (331 aa).

Positions 6 to 60 (PVLQDVADRVGVTKMTVSRFLRNPEQVSVALRGKIAAALDELGYIPNRAPDILSN) constitute an HTH lacI-type domain. The H-T-H motif DNA-binding region spans 8 to 27 (LQDVADRVGVTKMTVSRFLR).

The protein operates within carbohydrate acid metabolism; D-gluconate degradation [regulation]. Functionally, negative regulator for the gluconate utilization system GNT-I, the gntUKR operon. This is HTH-type transcriptional regulator GntR (gntR) from Escherichia coli O6:H1 (strain CFT073 / ATCC 700928 / UPEC).